A 166-amino-acid polypeptide reads, in one-letter code: Regulatory protein RecX (166 aa).

This sequence belongs to the RecX family.

Its subcellular location is the cytoplasm. Functionally, modulates RecA activity. The polypeptide is Regulatory protein RecX (Salmonella paratyphi C (strain RKS4594)).